The following is a 229-amino-acid chain: Biosynthetic peptidoglycan transglycosylase (229 aa).

The helical transmembrane segment at N11–Y31 threads the bilayer.

This sequence belongs to the glycosyltransferase 51 family.

It is found in the cell inner membrane. It carries out the reaction [GlcNAc-(1-&gt;4)-Mur2Ac(oyl-L-Ala-gamma-D-Glu-L-Lys-D-Ala-D-Ala)](n)-di-trans,octa-cis-undecaprenyl diphosphate + beta-D-GlcNAc-(1-&gt;4)-Mur2Ac(oyl-L-Ala-gamma-D-Glu-L-Lys-D-Ala-D-Ala)-di-trans,octa-cis-undecaprenyl diphosphate = [GlcNAc-(1-&gt;4)-Mur2Ac(oyl-L-Ala-gamma-D-Glu-L-Lys-D-Ala-D-Ala)](n+1)-di-trans,octa-cis-undecaprenyl diphosphate + di-trans,octa-cis-undecaprenyl diphosphate + H(+). It participates in cell wall biogenesis; peptidoglycan biosynthesis. In terms of biological role, peptidoglycan polymerase that catalyzes glycan chain elongation from lipid-linked precursors. This chain is Biosynthetic peptidoglycan transglycosylase, found in Caulobacter vibrioides (strain ATCC 19089 / CIP 103742 / CB 15) (Caulobacter crescentus).